The primary structure comprises 252 residues: 2-C-methyl-D-erythritol 4-phosphate cytidylyltransferase (252 aa).

Belongs to the IspD/TarI cytidylyltransferase family. IspD subfamily.

It catalyses the reaction 2-C-methyl-D-erythritol 4-phosphate + CTP + H(+) = 4-CDP-2-C-methyl-D-erythritol + diphosphate. It functions in the pathway isoprenoid biosynthesis; isopentenyl diphosphate biosynthesis via DXP pathway; isopentenyl diphosphate from 1-deoxy-D-xylulose 5-phosphate: step 2/6. In terms of biological role, catalyzes the formation of 4-diphosphocytidyl-2-C-methyl-D-erythritol from CTP and 2-C-methyl-D-erythritol 4-phosphate (MEP). The protein is 2-C-methyl-D-erythritol 4-phosphate cytidylyltransferase of Chlorobium phaeobacteroides (strain BS1).